The sequence spans 84 residues: Molybdopterin synthase sulfur carrier subunit (84 aa).

Position 84 is a 1-thioglycine; alternate (Gly-84). Gly-84 bears the Glycyl adenylate; alternate mark.

It belongs to the MoaD family. MOCS2A subfamily. In terms of assembly, heterotetramer; composed of 2 small (MOCS2A) and 2 large (MOCS2B) subunits. C-terminal thiocarboxylation occurs in 2 steps, it is first acyl-adenylated (-COAMP) via the hesA/moeB/thiF part of MOCS3, then thiocarboxylated (-COSH) via the rhodanese domain of MOCS3.

It is found in the cytoplasm. The protein operates within cofactor biosynthesis; molybdopterin biosynthesis. Functionally, acts as a sulfur carrier required for molybdopterin biosynthesis. Component of the molybdopterin synthase complex that catalyzes the conversion of precursor Z into molybdopterin by mediating the incorporation of 2 sulfur atoms into precursor Z to generate a dithiolene group. In the complex, serves as sulfur donor by being thiocarboxylated (-COSH) at its C-terminus by MOCS3. After interaction with MOCS2B, the sulfur is then transferred to precursor Z to form molybdopterin. The polypeptide is Molybdopterin synthase sulfur carrier subunit (Caenorhabditis elegans).